The chain runs to 84 residues: Kidney-associated antigen 1 (84 aa).

The disordered stretch occupies residues 31-84 (PGAAAAHLPRWPPPQLAASRREAPPLSQRPHRTQGAGSPPETNEKLTNPQVKEK). The span at 75–84 (KLTNPQVKEK) shows a compositional bias: polar residues.

In terms of tissue distribution, expressed in testis and kidney, and, at lower levels, in urinary bladder and liver. Expressed by a high proportion of tumors of various histologic origin, including melanomas, sarcomas and colorectal carcinomas.

In Homo sapiens (Human), this protein is Kidney-associated antigen 1 (KAAG1).